Consider the following 598-residue polypeptide: Fumarate reductase flavoprotein subunit (598 aa).

FAD-binding positions include 12–16 (GAGGA), 36–38 (ISK), 44–52 (SHTVAAEGG), 156–158 (HFV), and Asp212. A Tele-8alpha-FAD histidine modification is found at His45. Catalysis depends on residues His233 and Arg249. FAD contacts are provided by residues 356–357 (HY), Glu380, and 391–397 (RLGSNSL). Residues 577–598 (AKRVYGGEADAQEKSDKEQANG) are disordered. Over residues 587–598 (AQEKSDKEQANG) the composition is skewed to basic and acidic residues.

The protein belongs to the FAD-dependent oxidoreductase 2 family. FRD/SDH subfamily. As to quaternary structure, part of an enzyme complex containing four subunits: a flavoprotein (FrdA), an iron-sulfur protein (FrdB), and two hydrophobic anchor proteins (FrdC and FrdD). Interacts with SdhE. FAD is required as a cofactor.

The protein localises to the cell inner membrane. The catalysed reaction is a quinone + succinate = fumarate + a quinol. It catalyses the reaction a menaquinone + succinate = a menaquinol + fumarate. Two distinct, membrane-bound, FAD-containing enzymes are responsible for the catalysis of fumarate and succinate interconversion; the fumarate reductase is used in anaerobic growth, and the succinate dehydrogenase is used in aerobic growth. The chain is Fumarate reductase flavoprotein subunit from Serratia sp. (strain ATCC 39006) (Prodigiosinella confusarubida).